The sequence spans 1270 residues: DNA-directed RNA polymerase subunit beta (1270 aa).

Belongs to the RNA polymerase beta chain family. The RNAP catalytic core consists of 2 alpha, 1 beta, 1 beta' and 1 omega subunit. When a sigma factor is associated with the core the holoenzyme is formed, which can initiate transcription.

It catalyses the reaction RNA(n) + a ribonucleoside 5'-triphosphate = RNA(n+1) + diphosphate. In terms of biological role, DNA-dependent RNA polymerase catalyzes the transcription of DNA into RNA using the four ribonucleoside triphosphates as substrates. The protein is DNA-directed RNA polymerase subunit beta of Bacteroides fragilis (strain ATCC 25285 / DSM 2151 / CCUG 4856 / JCM 11019 / LMG 10263 / NCTC 9343 / Onslow / VPI 2553 / EN-2).